The primary structure comprises 652 residues: DNA ligase (652 aa).

NAD(+) is bound by residues 29–33 (DSEYD), 78–79 (SL), and E107. Catalysis depends on K109, which acts as the N6-AMP-lysine intermediate. NAD(+)-binding residues include R130, E164, K278, and K302. C395, C398, C413, and C418 together coordinate Zn(2+). Residues 577–652 (VADAALSGLT…VRDEAWLESL (76 aa)) form the BRCT domain.

It belongs to the NAD-dependent DNA ligase family. LigA subfamily. Requires Mg(2+) as cofactor. It depends on Mn(2+) as a cofactor.

It catalyses the reaction NAD(+) + (deoxyribonucleotide)n-3'-hydroxyl + 5'-phospho-(deoxyribonucleotide)m = (deoxyribonucleotide)n+m + AMP + beta-nicotinamide D-nucleotide.. In terms of biological role, DNA ligase that catalyzes the formation of phosphodiester linkages between 5'-phosphoryl and 3'-hydroxyl groups in double-stranded DNA using NAD as a coenzyme and as the energy source for the reaction. It is essential for DNA replication and repair of damaged DNA. The sequence is that of DNA ligase from Streptococcus pneumoniae (strain P1031).